Reading from the N-terminus, the 483-residue chain is Altronate oxidoreductase (483 aa).

Residue 18 to 29 (IIQFGEGNFLRA) coordinates NAD(+).

The protein belongs to the mannitol dehydrogenase family. UxaB subfamily.

The enzyme catalyses D-altronate + NAD(+) = keto-D-tagaturonate + NADH + H(+). Its pathway is carbohydrate metabolism; pentose and glucuronate interconversion. The polypeptide is Altronate oxidoreductase (Escherichia coli O7:K1 (strain IAI39 / ExPEC)).